The sequence spans 303 residues: MALRALHAQPTGGPQLRFLLFLLLLLLLLSWPSQGDALALPEQRRSLSESQLNPDELRGRFQDLLSRLHANQSREDSNSEPTPDPAVRILSPEVRLGSHGRLLLRVNRASLTQGLPEAYRVHRALLLLTPSSRPWDITRPLQRAISLQGPHARALRLRLAPPPDLAVLPSGGARLELHLRSAAGRGRRSAHLHPRDSCPLGPGRCCHLETVQATLEDLGWSDWVLSPRQLQLSMCVGECPHLYRSANTHALIKARLHGLQPDRVPAPCCVPSSYTPVVLMHRTDSGVSLQTYDDLVAQGCHCA.

Positions 1-30 are cleaved as a signal peptide; it reads MALRALHAQPTGGPQLRFLLFLLLLLLLLS. Residues 31–188 constitute a propeptide that is removed on maturation; the sequence is WPSQGDALAL…LRSAAGRGRR (158 aa). N71 is a glycosylation site (N-linked (GlcNAc...) asparagine). 4 cysteine pairs are disulfide-bonded: C198/C205, C206/C269, C235/C300, and C239/C302.

It belongs to the TGF-beta family. Homodimer; disulfide-linked. Interacts with GFRAL and RET; ligand of GFRAL, which mediates GDF15 internalization and cellular signaling through interaction with RET via the formation of a 2:2:2 ternary complex composed of GDF15, GFRAL and RET. Detected in plasma (at protein level).

The protein localises to the secreted. Its function is as follows. Hormone produced in response to various stresses to confer information about those stresses to the brain, and trigger an aversive response, characterized by nausea and/or loss of appetite. The aversive response is both required to reduce continuing exposure to those stresses at the time of exposure and to promote avoidance behavior in the future. Acts by binding to its receptor, GFRAL, activating GFRAL-expressing neurons localized in the area postrema and nucleus tractus solitarius of the brainstem. It then triggers the activation of neurons localized within the parabrachial nucleus and central amygdala, which constitutes part of the 'emergency circuit' that shapes responses to stressful conditions. The GDF15-GFRAL signal induces expression of genes involved in metabolism, such as lipid metabolism in adipose tissues. Contributes to the effect of metformin, an anti-diabetic drug, on appetite reduction and weight loss: produced in the kidney in response to metformin treatment, thereby activating the GDF15-GFRAL response, leading to reduced appetite and weight. Required for avoidance behavior in response to food allergens: induced downstream of mast cell activation to promote aversion and minimize harmful effects of exposure to noxious substances. Produced in response to anticancer drugs, such as camptothecin or cisplatin, promoting nausea and contributing to malnutrition. Overproduced in many cancers, promoting anorexia in cancer (cachexia). Responsible for the risk of nausea during pregnancy: high levels of GDF15 during pregnancy, mostly originating from embryos, are associated with increased nausea. Maternal sensitivity to nausea is probably determined by pre-pregnancy exposure to GDF15, females with naturally high level of GDF15 being less susceptible to nausea than female rats with low levels of GDF15 before pregnancy. Promotes metabolic adaptation in response to systemic inflammation caused by bacterial and viral infections in order to promote tissue tolerance and prevent tissue damage. Required for tissue tolerance in response to myocardial infarction by acting as an inhibitor of leukocyte integring activation, thereby protecting against cardiac rupture. Inhibits growth hormone signaling on hepatocytes. In Rattus norvegicus (Rat), this protein is Growth/differentiation factor 15.